Here is a 406-residue protein sequence, read N- to C-terminus: Probable endo-xylogalacturonan hydrolase A (406 aa).

A signal peptide spans 1-18; that stretch reads MLYPRNLALFSLLSLSSA. 4 PbH1 repeats span residues 183–213, 214–235, 237–257, and 299–320; these read TQHV…DIGA, STHV…AFKP, SNYV…SVGS, and VKNV…QIES. D228 functions as the Proton donor in the catalytic mechanism. H251 is an active-site residue. N301 carries an N-linked (GlcNAc...) asparagine glycan.

This sequence belongs to the glycosyl hydrolase 28 family.

Its subcellular location is the secreted. Pectinolytic enzyme involved in the degradation of xylogalacturonan (xga), a galacturonan backbone heavily substituted with xylose, and which is one important component of the hairy regions of pectin. Activity requires a galacturonic acid backbone substituted with xylose. The protein is Probable endo-xylogalacturonan hydrolase A (xghA) of Aspergillus fumigatus (strain ATCC MYA-4609 / CBS 101355 / FGSC A1100 / Af293) (Neosartorya fumigata).